Reading from the N-terminus, the 216-residue chain is Probable methylthioribulose-1-phosphate dehydratase (216 aa).

Cys87 lines the substrate pocket. 2 residues coordinate Zn(2+): His105 and His107. The Proton donor/acceptor role is filled by Glu129.

Belongs to the aldolase class II family. MtnB subfamily. Zn(2+) is required as a cofactor.

It localises to the cytoplasm. It catalyses the reaction 5-(methylsulfanyl)-D-ribulose 1-phosphate = 5-methylsulfanyl-2,3-dioxopentyl phosphate + H2O. It functions in the pathway amino-acid biosynthesis; L-methionine biosynthesis via salvage pathway; L-methionine from S-methyl-5-thio-alpha-D-ribose 1-phosphate: step 2/6. Catalyzes the dehydration of methylthioribulose-1-phosphate (MTRu-1-P) into 2,3-diketo-5-methylthiopentyl-1-phosphate (DK-MTP-1-P). This is Probable methylthioribulose-1-phosphate dehydratase from Drosophila persimilis (Fruit fly).